The primary structure comprises 342 residues: Small GTPase LIP1 (342 aa).

Positions 12–285 (KEQILAPLCG…FHGDPYKYNN (274 aa)) are small GTPase-like. GTP contacts are provided by residues 29-36 (GDSGVGKT), 90-94 (DVSGH), and 160-163 (NKAD). 2 disordered regions span residues 274 to 313 (TSFH…TPDN) and 323 to 342 (SVQE…DINV). The span at 323–333 (SVQETTNNGSA) shows a compositional bias: polar residues.

This sequence belongs to the small GTPase superfamily.

The protein localises to the nucleus. Its subcellular location is the cytoplasm. Its function is as follows. Functional small GTPase that acts as a negative factor controlling the light-dependent period shortening of circadian rhythms and light-induced phase resetting during the subjective night. May protect the clock from excessive or mistimed light. Suppresses red and blue light-mediated photomorphogenesis and is required for light-controlled inhibition of endoreplication and tolerance to salt stress. The entrainment of the circadian clock is independent from the other pleiotropic effects. Could be a regulator of seedling establishment. The polypeptide is Small GTPase LIP1 (Arabidopsis thaliana (Mouse-ear cress)).